The following is a 179-amino-acid chain: ATP synthase subunit b (179 aa).

A helical transmembrane segment spans residues V29–G48.

It belongs to the ATPase B chain family. As to quaternary structure, F-type ATPases have 2 components, F(1) - the catalytic core - and F(0) - the membrane proton channel. F(1) has five subunits: alpha(3), beta(3), gamma(1), delta(1), epsilon(1). F(0) has four main subunits: a(1), b(1), b'(1) and c(10-14). The alpha and beta chains form an alternating ring which encloses part of the gamma chain. F(1) is attached to F(0) by a central stalk formed by the gamma and epsilon chains, while a peripheral stalk is formed by the delta, b and b' chains.

The protein resides in the cellular thylakoid membrane. In terms of biological role, f(1)F(0) ATP synthase produces ATP from ADP in the presence of a proton or sodium gradient. F-type ATPases consist of two structural domains, F(1) containing the extramembraneous catalytic core and F(0) containing the membrane proton channel, linked together by a central stalk and a peripheral stalk. During catalysis, ATP synthesis in the catalytic domain of F(1) is coupled via a rotary mechanism of the central stalk subunits to proton translocation. Component of the F(0) channel, it forms part of the peripheral stalk, linking F(1) to F(0). Functionally, the complex from the organism is particularly stable to disruption and remains functional after 6 hrs at 55 degrees Celsius. The polypeptide is ATP synthase subunit b (Thermosynechococcus vestitus (strain NIES-2133 / IAM M-273 / BP-1)).